We begin with the raw amino-acid sequence, 350 residues long: Cobalt-precorrin-5B C(1)-methyltransferase (350 aa).

It belongs to the CbiD family.

It catalyses the reaction Co-precorrin-5B + S-adenosyl-L-methionine = Co-precorrin-6A + S-adenosyl-L-homocysteine. It functions in the pathway cofactor biosynthesis; adenosylcobalamin biosynthesis; cob(II)yrinate a,c-diamide from sirohydrochlorin (anaerobic route): step 6/10. Its function is as follows. Catalyzes the methylation of C-1 in cobalt-precorrin-5B to form cobalt-precorrin-6A. This Syntrophotalea carbinolica (strain DSM 2380 / NBRC 103641 / GraBd1) (Pelobacter carbinolicus) protein is Cobalt-precorrin-5B C(1)-methyltransferase.